Here is a 425-residue protein sequence, read N- to C-terminus: Histidine--tRNA ligase (425 aa).

This sequence belongs to the class-II aminoacyl-tRNA synthetase family. In terms of assembly, homodimer.

It localises to the cytoplasm. It carries out the reaction tRNA(His) + L-histidine + ATP = L-histidyl-tRNA(His) + AMP + diphosphate + H(+). In Shewanella sp. (strain ANA-3), this protein is Histidine--tRNA ligase.